Here is a 1033-residue protein sequence, read N- to C-terminus: Isoleucine--tRNA ligase (1033 aa).

The 'HIGH' region signature appears at 47-57 (PTANGLPHVGH). The 'KMSKS' region motif lies at 590–594 (KMSKS). Lysine 593 serves as a coordination point for ATP.

Belongs to the class-I aminoacyl-tRNA synthetase family. IleS type 2 subfamily. In terms of assembly, monomer. Zn(2+) serves as cofactor.

It is found in the cytoplasm. The catalysed reaction is tRNA(Ile) + L-isoleucine + ATP = L-isoleucyl-tRNA(Ile) + AMP + diphosphate. Its function is as follows. Catalyzes the attachment of isoleucine to tRNA(Ile). As IleRS can inadvertently accommodate and process structurally similar amino acids such as valine, to avoid such errors it has two additional distinct tRNA(Ile)-dependent editing activities. One activity is designated as 'pretransfer' editing and involves the hydrolysis of activated Val-AMP. The other activity is designated 'posttransfer' editing and involves deacylation of mischarged Val-tRNA(Ile). This Bacillus thuringiensis (strain Al Hakam) protein is Isoleucine--tRNA ligase.